The primary structure comprises 756 residues: Subtilisin-like protease SBT3.9 (756 aa).

A signal peptide spans 1–25 (MSKTILFLALFLSIVLNVQISFVVA). Positions 26 to 108 (ESKVYVVYLG…VIPNTLYEMT (83 aa)) are cleaved as a propeptide — activation peptide. One can recognise an Inhibitor I9 domain in the interval 29 to 106 (VYVVYLGEKE…VQVIPNTLYE (78 aa)). The Peptidase S8 domain maps to 112-603 (TWDYLGVSPG…GGLINPEKAV (492 aa)). The Charge relay system role is filled by Asp-142. N-linked (GlcNAc...) asparagine glycans are attached at residues Asn-175 and Asn-202. His-218 (charge relay system) is an active-site residue. Asn-233, Asn-357, Asn-395, and Asn-519 each carry an N-linked (GlcNAc...) asparagine glycan. The region spanning 386–460 (DCEKLSANPN…ELGTDILFYI (75 aa)) is the PA domain. The Charge relay system role is filled by Ser-534.

The protein belongs to the peptidase S8 family.

It localises to the secreted. In Arabidopsis thaliana (Mouse-ear cress), this protein is Subtilisin-like protease SBT3.9.